Reading from the N-terminus, the 72-residue chain is Cell division protein ZapB (72 aa).

A coiled-coil region spans residues 1–72; the sequence is MSSEILDQLE…RSLLGQIDNV (72 aa).

This sequence belongs to the ZapB family. In terms of assembly, homodimer. The ends of the coiled-coil dimer bind to each other, forming polymers. Interacts with FtsZ.

The protein resides in the cytoplasm. In terms of biological role, non-essential, abundant cell division factor that is required for proper Z-ring formation. It is recruited early to the divisome by direct interaction with FtsZ, stimulating Z-ring assembly and thereby promoting cell division earlier in the cell cycle. Its recruitment to the Z-ring requires functional FtsA or ZipA. This chain is Cell division protein ZapB, found in Actinobacillus succinogenes (strain ATCC 55618 / DSM 22257 / CCUG 43843 / 130Z).